The following is a 63-amino-acid chain: DNA-directed RNA polymerase 7 kDa subunit (63 aa).

This sequence belongs to the poxviridae DNA-directed RNA polymerase 7 kDa subunit family. As to quaternary structure, the DNA-dependent RNA polymerase used for intermediate and late genes expression consists of eight subunits 147 kDa, 133 kDa, 35 kDa, 30 kDa, 22 kDa, 19 kDa, 18 kDa and 7 kDa totalling more than 500 kDa in mass. The same holoenzyme, with the addition of the transcription-specificity factor RAP94, is used for early gene expression.

Its subcellular location is the virion. The enzyme catalyses RNA(n) + a ribonucleoside 5'-triphosphate = RNA(n+1) + diphosphate. Functionally, part of the DNA-dependent RNA polymerase which catalyzes the transcription of viral DNA into RNA using the four ribonucleoside triphosphates as substrates. Responsible for the transcription of early, intermediate and late genes. DNA-dependent RNA polymerase associates with the early transcription factor (ETF) thereby allowing the early genes transcription. Late transcription, and probably also intermediate transcription, require newly synthesized RNA polymerase. In Fowlpox virus (strain NVSL) (FPV), this protein is DNA-directed RNA polymerase 7 kDa subunit (RPO7).